Here is a 214-residue protein sequence, read N- to C-terminus: Cytochrome b (214 aa).

The next 4 membrane-spanning stretches (helical) occupy residues 31–51 (FGSM…FLAI), 75–96 (WIMQ…YIHI), 111–131 (WLSG…GYVL), and 176–196 (FFAL…IHII). Residues H81 and H95 each contribute to the heme b site. Positions 180 and 194 each coordinate heme b. H199 lines the a ubiquinone pocket.

The protein belongs to the cytochrome b family. The cytochrome bc1 complex contains 3 respiratory subunits (MT-CYB, CYC1 and UQCRFS1), 2 core proteins (UQCRC1 and UQCRC2) and probably 6 low-molecular weight proteins. Requires heme b as cofactor.

Its subcellular location is the mitochondrion inner membrane. Component of the ubiquinol-cytochrome c reductase complex (complex III or cytochrome b-c1 complex) that is part of the mitochondrial respiratory chain. The b-c1 complex mediates electron transfer from ubiquinol to cytochrome c. Contributes to the generation of a proton gradient across the mitochondrial membrane that is then used for ATP synthesis. In Atractaspis micropholis (Mole viper), this protein is Cytochrome b (MT-CYB).